Consider the following 208-residue polypeptide: MTIQTFKSTDFDVFTVDGLEERMSAIKTNIHPKLEALGEQFAEYLSKHTDENFFYHVAKHARRKVNPPNDTWVAFSTNKRGYKMLPHFQIGLWGTHAFIYFGLIYECPQKVETAHAFLEHLNDLKTNIPNDFVWSIDHTKPSVKLHKTLETEDLQKMIERLATVKKAELLVGIHISPEEFSAMTNEQFLAKIESTMQPLLPLYALCNR.

It belongs to the UPF0637 family.

The chain is UPF0637 protein BCG9842_B1177 from Bacillus cereus (strain G9842).